The chain runs to 142 residues: UPF0102 protein Bamb_0202 (142 aa).

The disordered stretch occupies residues 1–23 (MCHAAPAAPASGRGLPHGGGNFS).

The protein belongs to the UPF0102 family.

The sequence is that of UPF0102 protein Bamb_0202 from Burkholderia ambifaria (strain ATCC BAA-244 / DSM 16087 / CCUG 44356 / LMG 19182 / AMMD) (Burkholderia cepacia (strain AMMD)).